A 434-amino-acid polypeptide reads, in one-letter code: UPF0597 protein CLK_1462 (434 aa).

Belongs to the UPF0597 family.

The chain is UPF0597 protein CLK_1462 from Clostridium botulinum (strain Loch Maree / Type A3).